A 507-amino-acid polypeptide reads, in one-letter code: Trigger factor (507 aa).

A PPIase FKBP-type domain is found at 162–243 (GDFVSLDLSA…VRGVKEKELP (82 aa)). Residues 434 to 507 (NLPRRPSGEA…DSELPASETK (74 aa)) are disordered. Positions 442–460 (EAEDDVRDISDELDAEELE) are enriched in acidic residues. A compositionally biased stretch (low complexity) spans 461 to 488 (VPAAAPSAEVTAAAGDEATATATATDAD).

This sequence belongs to the FKBP-type PPIase family. Tig subfamily.

It is found in the cytoplasm. The catalysed reaction is [protein]-peptidylproline (omega=180) = [protein]-peptidylproline (omega=0). Functionally, involved in protein export. Acts as a chaperone by maintaining the newly synthesized protein in an open conformation. Functions as a peptidyl-prolyl cis-trans isomerase. The sequence is that of Trigger factor from Parafrankia sp. (strain EAN1pec).